Consider the following 152-residue polypeptide: UPF0225 protein YchJ (152 aa).

This sequence belongs to the UPF0225 family.

The polypeptide is UPF0225 protein YchJ (Shigella boydii serotype 18 (strain CDC 3083-94 / BS512)).